Here is a 428-residue protein sequence, read N- to C-terminus: Isocitrate lyase 1 (428 aa).

91–93 (SGW) lines the substrate pocket. Position 153 (Asp-153) interacts with Mg(2+). The active-site Proton acceptor is Cys-191. Substrate contacts are provided by residues 192-193 (GH), Arg-228, 313-317 (NCSPS), and Thr-347.

This sequence belongs to the isocitrate lyase/PEP mutase superfamily. Isocitrate lyase family. Homotetramer. The cofactor is Mg(2+).

It carries out the reaction D-threo-isocitrate = glyoxylate + succinate. It catalyses the reaction (2S,3R)-3-hydroxybutane-1,2,3-tricarboxylate = pyruvate + succinate. It participates in carbohydrate metabolism; glyoxylate cycle; (S)-malate from isocitrate: step 1/2. Its function is as follows. Involved in the persistence and virulence of M.tuberculosis. Catalyzes the reversible formation of succinate and glyoxylate from isocitrate, a key step of the glyoxylate cycle, which operates as an anaplerotic route for replenishing the tricarboxylic acid cycle during growth on fatty acid substrates. It also catalyzes the formation of pyruvate and succinate from 2-methylisocitrate, a key step in the methylcitrate cycle (propionate degradation route). This chain is Isocitrate lyase 1 (icl1), found in Mycobacterium tuberculosis (strain ATCC 35801 / TMC 107 / Erdman).